We begin with the raw amino-acid sequence, 239 residues long: Ribonuclease PH (239 aa).

Residues R87 and 125-127 (GTR) contribute to the phosphate site.

The protein belongs to the RNase PH family. As to quaternary structure, homohexameric ring arranged as a trimer of dimers.

It catalyses the reaction tRNA(n+1) + phosphate = tRNA(n) + a ribonucleoside 5'-diphosphate. Its function is as follows. Phosphorolytic 3'-5' exoribonuclease that plays an important role in tRNA 3'-end maturation. Removes nucleotide residues following the 3'-CCA terminus of tRNAs; can also add nucleotides to the ends of RNA molecules by using nucleoside diphosphates as substrates, but this may not be physiologically important. Probably plays a role in initiation of 16S rRNA degradation (leading to ribosome degradation) during starvation. The protein is Ribonuclease PH of Saccharophagus degradans (strain 2-40 / ATCC 43961 / DSM 17024).